The following is a 310-amino-acid chain: Protein DOS2 (310 aa).

Composition is skewed to basic and acidic residues over residues 15 to 26 (DKISNSHTKETG) and 135 to 146 (SNDKDENSKENE). 2 disordered regions span residues 15-45 (DKIS…KTNE) and 131-151 (AEND…AVGG). The BSD domain maps to 176-228 (QLDPFDVDEKTEEICSILQGDKDISKLMNDIVPHKISYKDFWHIYFLQRNKIL). The segment at 240 to 310 (KKEKETEEKE…KDDDDDDDWE (71 aa)) is disordered. The span at 247–263 (EKEVEWDDEEEEEDDDK) shows a compositional bias: acidic residues. Basic and acidic residues-rich tracts occupy residues 264-276 (VEAV…KGET) and 284-300 (GLKD…KDES). Residues 301 to 310 (KDDDDDDDWE) are compositionally biased toward acidic residues.

In terms of biological role, acts in ubiquitin metabolism and is necessary for the control of single-copy DNA replication. This is Protein DOS2 (DOS2) from Saccharomyces cerevisiae (strain ATCC 204508 / S288c) (Baker's yeast).